The primary structure comprises 282 residues: Putative 4-diphosphocytidyl-2-C-methyl-D-erythritol kinase (282 aa).

Lys9 is a catalytic residue. 93 to 103 (PVSAGLAGGSA) is an ATP binding site. Asp135 is a catalytic residue.

Belongs to the GHMP kinase family. IspE subfamily.

The enzyme catalyses 4-CDP-2-C-methyl-D-erythritol + ATP = 4-CDP-2-C-methyl-D-erythritol 2-phosphate + ADP + H(+). Functionally, catalyzes the phosphorylation of the position 2 hydroxy group of 4-diphosphocytidyl-2C-methyl-D-erythritol. The sequence is that of Putative 4-diphosphocytidyl-2-C-methyl-D-erythritol kinase from Staphylococcus aureus (strain MSSA476).